Here is a 343-residue protein sequence, read N- to C-terminus: T-cell immunoglobulin and mucin domain-containing protein 4 (343 aa).

The N-terminal stretch at 1–22 (MSKGLLLLWLVTELWWLYLTPA) is a signal peptide. Residues 23 to 128 (ASEDTIIGFL…WFNDVKKNVR (106 aa)) form the Ig-like V-type domain. At 23-279 (ASEDTIIGFL…KSHQINSRQT (257 aa)) the chain is on the extracellular side. Intrachain disulfides connect cysteine 40-cysteine 112, cysteine 53-cysteine 64, and cysteine 59-cysteine 111. A glycan (N-linked (GlcNAc...) asparagine) is linked at asparagine 220. The tract at residues 239-258 (TGSNPGILPSTSQLTTQKTT) is disordered. The span at 248–258 (STSQLTTQKTT) shows a compositional bias: low complexity. A helical transmembrane segment spans residues 280–300 (ILIIACCVGFVLMVLLFLAFL). The Cytoplasmic segment spans residues 301–343 (LRGKVTGANCLQRHKRPDNTEDSDSVLNDMSHGRDDEDGIFTL). Residues 313–343 (RHKRPDNTEDSDSVLNDMSHGRDDEDGIFTL) are disordered. Residues serine 323, serine 325, and serine 331 each carry the phosphoserine modification.

It belongs to the immunoglobulin superfamily. TIM family. In terms of assembly, homodimer. Predominantly expressed in lymphoid tissues, such as spleen, lymph nodes, and Peyer patches. Also expressed in fetal liver, salivary gland, and spleen stromal cells, predominantly in the marginal zone and to a lesser extent throughout the white pulp. Not expressed in bone marrow-derived cells. Expressed mainly by antigen presenting cells (APCs) in T- and B-cell areas, but not by T- or B-lymphocytes.

It localises to the membrane. Functionally, phosphatidylserine receptor that plays different role in immune response including phagocytosis of apoptotic cells and T-cell regulation. Controls T-cell activation in a bimodal fashion, decreasing the activation of naive T-cells by inducing cell cycle arrest, while increasing proliferation of activated T-cells by activating AKT1 and ERK1/2 phosphorylations and subsequent signaling pathways. Also plays a role in efferocytosis which is the process by which apoptotic cells are removed by phagocytic cells. Mechanistically, promotes the engulfment of apoptotic cells or exogenous particles by securing them to phagocytes through direct binding to phosphatidylserine present on apoptotic cells, while other engulfment receptors such as MERTK efficiently recognize apoptotic cells and mediate their ingestion. Additionally, promotes autophagy process by suppressing NLRP3 inflammasome activity via activation of STK11/PRKAA1 pathway in a phosphatidylserine-dependent mechanism. The polypeptide is T-cell immunoglobulin and mucin domain-containing protein 4 (Timd4) (Mus musculus (Mouse)).